A 2715-amino-acid chain; its full sequence is Cilia- and flagella-associated protein 46 (2715 aa).

10 TPR repeats span residues 89–122 (CRAQ…AKGE), 175–208 (AELM…IKSH), 261–295 (GDIS…LLFE), 324–359 (PGKL…AQLD), 426–459 (CQVH…DSLG), 469–503 (STRL…TPKD), 807–845 (SRKF…TNGS), 936–969 (LQTL…GIKY), 1111–1144 (AALY…LPRT), and 1174–1211 (AESE…LQKP). The interval 1356–1412 (SHLLLPKKEKENERSKEKEKERSKEKENERSKEKDKEKGKEEKVKEPKQSQSPAPIK) is disordered. Basic and acidic residues predominate over residues 1361–1403 (PKKEKENERSKEKEKERSKEKENERSKEKDKEKGKEEKVKEPK). A coiled-coil region spans residues 1362-1401 (KKEKENERSKEKEKERSKEKENERSKEKDKEKGKEEKVKE). One copy of the TPR 11 repeat lies at 1639–1672 (AQCLLLLAQLANKEKNYGQAKKMIAQAQHLGGSE). A coiled-coil region spans residues 1781–1810 (VDVKLERAKIKRLRAQNEKDEEQKTAYYLE). Disordered regions lie at residues 2000-2023 (EEEG…EHCR), 2294-2319 (AVVA…HSTV), and 2371-2399 (ETEG…KGSI). Composition is skewed to basic and acidic residues over residues 2300–2311 (GKSKGKDKERKT) and 2371–2383 (ETEG…GRSR). Residues 2384 to 2398 (DPKKRSLAKKGRKGS) are compositionally biased toward basic residues. 2 TPR repeats span residues 2399–2432 (IPRT…EMLT) and 2504–2537 (VAVL…EANW). The tract at residues 2541 to 2567 (ASPSEDEWRRGGEPRRGFSDLEGQAAA) is disordered. Over residues 2546 to 2559 (DEWRRGGEPRRGFS) the composition is skewed to basic and acidic residues.

This sequence belongs to the CFAP46 family.

It is found in the cytoplasm. The protein localises to the cytoskeleton. Its subcellular location is the cilium axoneme. Its function is as follows. As part of the central apparatus of the cilium axoneme plays a role in cilium movement. The polypeptide is Cilia- and flagella-associated protein 46 (Homo sapiens (Human)).